We begin with the raw amino-acid sequence, 516 residues long: MRDTSPFYITTAISYPNGKPHIGHAYELIATDAMARFQRLDGREVFFLTGTDEHGQKMQQTAKKEGISPQELAARNSAEFQNMARLLNASNDDFIRTTEQRHHEASQAIWMRMGEAGDLYKDSYAGWYSVRDEAYYQENETELRGDGVRYGPQGTPVEWVEEESYFFRLSAYQDKLLKHYEENPDFIGPAERRNEVISFVKSGLKDLSVSRTTFDWGIKVPNDPSHVMYVWVDALTNYVTATGCLTDPTGPRAKFWPANIHVIGKDIIRFHAVYWPAFLMSAGLPLPKRVFAHGFLLNKGEKMSKSLGNVVDPFNLVEHFGLDQIRYFFLREVSFGQDGSYSEEGIATRINSDLANGIGNLASRSLSMIVKNCDGQVPLCGPLTDEDKAMLAAADSLIGTAREEMGKQLIHRALAAIIAVVSETDRYFAGQEPWALKKTDPSRMATVLYVTAEVVRQVAILLQPFMPESAGKLLDLVAVPTDRRDFAHLGEAGRLVSGTPLEAPKPVFPRYVAPEA.

The 'HIGH' region motif lies at 14–24; that stretch reads SYPNGKPHIGH. The short motif at 302–306 is the 'KMSKS' region element; that stretch reads KMSKS. ATP is bound at residue Lys305.

It belongs to the class-I aminoacyl-tRNA synthetase family. MetG type 2B subfamily. Monomer.

Its subcellular location is the cytoplasm. It carries out the reaction tRNA(Met) + L-methionine + ATP = L-methionyl-tRNA(Met) + AMP + diphosphate. Its function is as follows. Is required not only for elongation of protein synthesis but also for the initiation of all mRNA translation through initiator tRNA(fMet) aminoacylation. This is Methionine--tRNA ligase from Rhizobium meliloti (strain 1021) (Ensifer meliloti).